The sequence spans 513 residues: Matrix metalloproteinase-27 (513 aa).

Positions 1–17 (MKRLLLLFLFFITFSSA) are cleaved as a signal peptide. Residues 18-98 (FPLVRMTENE…PRCGVPDVGQ (81 aa)) constitute a propeptide, activation peptide. N-linked (GlcNAc...) asparagine glycosylation occurs at Asn55. A Cysteine switch motif is present at residues 89-96 (PRCGVPDV). Residue Cys91 coordinates Zn(2+). Asn110 carries an N-linked (GlcNAc...) asparagine glycan. 2 residues coordinate Ca(2+): Asp121 and Asp155. Residue His165 coordinates Zn(2+). Ca(2+)-binding residues include Asp173, Gly174, and Val178. Zn(2+) is bound at residue His181. Ca(2+) contacts are provided by Gly188 and Asp192. His194 contributes to the Zn(2+) binding site. Positions 196 and 199 each coordinate Ca(2+). Position 216 (His216) interacts with Zn(2+). Glu217 is a catalytic residue. Residues His220 and His226 each contribute to the Zn(2+) site. 4 Hemopexin repeats span residues 276 to 325 (PHAC…WPSL), 326 to 371 (PADL…GFPG), 373 to 421 (VKKI…FPGI), and 422 to 465 (SIRV…WFQC). A disulfide bridge links Cys279 with Cys465. Asp286 contacts Ca(2+). Positions 377 and 426 each coordinate Ca(2+). Residue Asn452 is glycosylated (N-linked (GlcNAc...) asparagine). Residues 466–513 (KEPKNSSFGFDINKEKAHSGGIKILYHKSLSLFIFGIVHLLKNTSIYQ) are required for retention in the endoplasmic reticulum.

It belongs to the peptidase M10A family. Requires Ca(2+) as cofactor. Zn(2+) is required as a cofactor. Post-translationally, N-glycosylated. Expressed in B-cells. Expressed in a subset of endometrial macrophages related to menstruation and in ovarian and peritoneal endometriotic lesions (at protein level).

It localises to the endoplasmic reticulum. Functionally, matrix metalloproteinases degrade protein components of the extracellular matrix such as fibronectin, laminin, gelatins and/or collagens. In Homo sapiens (Human), this protein is Matrix metalloproteinase-27 (MMP27).